The following is a 104-amino-acid chain: Nucleoid-associated protein PEPE_1483 (104 aa).

Residues 1-35 are disordered; it reads MRGGMGNMQSMMRQMQKMQKKVTEEQEKLNQTEFT. A compositionally biased stretch (low complexity) spans 8–17; sequence MQSMMRQMQK. Basic and acidic residues predominate over residues 21-30; it reads KVTEEQEKLN.

It belongs to the YbaB/EbfC family. Homodimer.

It is found in the cytoplasm. It localises to the nucleoid. In terms of biological role, binds to DNA and alters its conformation. May be involved in regulation of gene expression, nucleoid organization and DNA protection. This Pediococcus pentosaceus (strain ATCC 25745 / CCUG 21536 / LMG 10740 / 183-1w) protein is Nucleoid-associated protein PEPE_1483.